The following is a 798-amino-acid chain: Integrin beta-1-A (798 aa).

The first 21 residues, 1 to 21, serve as a signal peptide directing secretion; that stretch reads MAHYPVFTVGLLTCLVLCINA. The Extracellular portion of the chain corresponds to 22–727; the sequence is QQGGTECLKA…VKEPECPSGP (706 aa). A PSI domain is found at 27-77; the sequence is ECLKANAKSCGECIQAGPNCGWCTKVDFLQEGEPTSARCDDLAALKSKGCP. 28 disulfides stabilise this stretch: cysteine 28–cysteine 46, cysteine 36–cysteine 464, cysteine 39–cysteine 65, cysteine 49–cysteine 76, cysteine 206–cysteine 212, cysteine 260–cysteine 300, cysteine 400–cysteine 414, cysteine 434–cysteine 462, cysteine 466–cysteine 486, cysteine 477–cysteine 489, cysteine 491–cysteine 500, cysteine 502–cysteine 533, cysteine 516–cysteine 531, cysteine 525–cysteine 536, cysteine 538–cysteine 553, cysteine 555–cysteine 576, cysteine 560–cysteine 574, cysteine 568–cysteine 579, cysteine 581–cysteine 590, cysteine 592–cysteine 615, cysteine 599–cysteine 613, cysteine 607–cysteine 618, cysteine 620–cysteine 630, cysteine 633–cysteine 636, cysteine 640–cysteine 691, cysteine 646–cysteine 665, cysteine 649–cysteine 661, and cysteine 699–cysteine 723. The interval 76–106 is disordered; it reads CPEDDIQNPRGRKQKLKDIPITSKGKGERMD. Asparagine 109 and asparagine 131 each carry an N-linked (GlcNAc...) asparagine glycan. The VWFA domain maps to 139-377; it reads DYPIDLYYLM…QLIIDSYNSL (239 aa). Mg(2+) is bound by residues serine 151 and serine 153. Ca(2+)-binding residues include serine 153, aspartate 156, aspartate 157, and glutamate 188. Asparagine 211 and asparagine 223 each carry an N-linked (GlcNAc...) asparagine glycan. Residues asparagine 243, aspartate 245, proline 247, and glutamate 248 each coordinate Ca(2+). Residue glutamate 248 coordinates Mg(2+). N-linked (GlcNAc...) asparagine glycosylation is found at asparagine 268 and asparagine 362. N-linked (GlcNAc...) asparagine glycosylation is present at asparagine 416. I-EGF domains are found at residues 466–501, 502–554, 555–591, and 592–631; these read CQDK…KECE, CSTD…KYCE, CDNF…SACD, and CSED…PTCE. N-linked (GlcNAc...) asparagine glycosylation occurs at asparagine 481. N-linked (GlcNAc...) asparagine glycosylation is present at asparagine 520. N-linked (GlcNAc...) asparagine glycosylation occurs at asparagine 584. Asparagine 669 is a glycosylation site (N-linked (GlcNAc...) asparagine). A helical membrane pass occupies residues 728-751; it reads DIIPIVAGVVAGIVLIGLALLLIW. At 752 to 798 the chain is on the cytoplasmic side; it reads KLLMIIHDRREFAKFEKEKMNAKWDTGENPIYKSAVTTVVNPKYEGK. The residue at position 783 (tyrosine 783) is a Phosphotyrosine.

It belongs to the integrin beta chain family. In terms of assembly, heterodimer of an alpha and a beta subunit.

The protein localises to the cell membrane. It localises to the cell projection. It is found in the invadopodium membrane. The protein resides in the ruffle membrane. Its subcellular location is the melanosome. The protein localises to the cleavage furrow. It localises to the lamellipodium. It is found in the ruffle. In terms of biological role, beta integrins associate with alpha subunits to form receptor complexes that recognize the sequence R-G-D in a wide array of ligands. May be involved in osteoblast compaction. May play role in myoblast differentiation and fusion during skeletal myogenesis. The chain is Integrin beta-1-A (itgb1-a) from Xenopus laevis (African clawed frog).